The chain runs to 296 residues: Ribose import binding protein RbsB (296 aa).

The first 25 residues, 1-25, serve as a signal peptide directing secretion; sequence MNMKKLATLVSAVALSATVSANAMA.

It belongs to the bacterial solute-binding protein 2 family. As to quaternary structure, the complex is composed of an ATP-binding protein (RbsA), two transmembrane proteins (RbsC) and a solute-binding protein (RbsB).

It localises to the periplasm. Part of the ABC transporter complex RbsABC involved in ribose import. Binds ribose. The protein is Ribose import binding protein RbsB (rbsB) of Salmonella typhi.